Here is a 463-residue protein sequence, read N- to C-terminus: FAD-dependent monooxygenase ausM (463 aa).

Glutamate 40, glycine 54, and arginine 113 together coordinate FAD. The active site involves tyrosine 217. FAD-binding residues include aspartate 309 and alanine 322. Residues 443 to 463 (VPWLVISLPVLASVLCYLMFA) form a helical membrane-spanning segment.

The protein belongs to the paxM FAD-dependent monooxygenase family. The cofactor is FAD.

It is found in the membrane. The protein operates within secondary metabolite biosynthesis; terpenoid biosynthesis. Its function is as follows. FAD-dependent monooxygenase; part of the gene cluster that mediates the biosynthesis of calidodehydroaustin, a fungal meroterpenoid. The first step of the pathway is the synthesis of 3,5-dimethylorsellinic acid by the polyketide synthase ausA. 3,5-dimethylorsellinic acid is then prenylated by the polyprenyl transferase ausN. Further epoxidation by the FAD-dependent monooxygenase ausM and cyclization by the probable terpene cyclase ausL lead to the formation of protoaustinoid A. Protoaustinoid A is then oxidized to spiro-lactone preaustinoid A3 by the combined action of the FAD-binding monooxygenases ausB and ausC, and the dioxygenase ausE. Acid-catalyzed keto-rearrangement and ring contraction of the tetraketide portion of preaustinoid A3 by ausJ lead to the formation of preaustinoid A4. The aldo-keto reductase ausK, with the help of ausH, is involved in the next step by transforming preaustinoid A4 into isoaustinone which is in turn hydroxylated by the P450 monooxygenase ausI to form austinolide. The cytochrome P450 monooxygenase ausG modifies austinolide to austinol. Austinol is further acetylated to austin by the O-acetyltransferase ausP, which spontaneously changes to dehydroaustin. The cytochrome P450 monooxygenase ausR then converts dehydroaustin is into 7-dehydrodehydroaustin. The hydroxylation catalyzed by ausR permits the O-acetyltransferase ausQ to add an additional acetyl group to the molecule, leading to the formation of acetoxydehydroaustin. The short chain dehydrogenase ausT catalyzes the reduction of the double bond present between carbon atoms 1 and 2 to convert 7-dehydrodehydroaustin into 1,2-dihydro-7-hydroxydehydroaustin. AusQ catalyzes not only an acetylation reaction but also the addition of the PKS ausV diketide product to 1,2-dihydro-7-hydroxydehydroaustin, forming precalidodehydroaustin. Finally, the iron/alpha-ketoglutarate-dependent dioxygenase converts precalidodehydroaustin into calidodehydroaustin. This chain is FAD-dependent monooxygenase ausM, found in Aspergillus calidoustus.